The sequence spans 225 residues: ATP-dependent dethiobiotin synthetase BioD (225 aa).

Position 12–17 (12–17 (EVGKTY)) interacts with ATP. T16 provides a ligand contact to Mg(2+). The active site involves K37. Residue S41 coordinates substrate. ATP contacts are provided by residues D52, 114 to 117 (EGAG), and 174 to 175 (NC). The Mg(2+) site is built by D52 and E114.

This sequence belongs to the dethiobiotin synthetase family. Homodimer. Mg(2+) is required as a cofactor.

The protein localises to the cytoplasm. The catalysed reaction is (7R,8S)-7,8-diammoniononanoate + CO2 + ATP = (4R,5S)-dethiobiotin + ADP + phosphate + 3 H(+). The protein operates within cofactor biosynthesis; biotin biosynthesis; biotin from 7,8-diaminononanoate: step 1/2. In terms of biological role, catalyzes a mechanistically unusual reaction, the ATP-dependent insertion of CO2 between the N7 and N8 nitrogen atoms of 7,8-diaminopelargonic acid (DAPA, also called 7,8-diammoniononanoate) to form a ureido ring. This is ATP-dependent dethiobiotin synthetase BioD from Francisella tularensis subsp. mediasiatica (strain FSC147).